Here is a 302-residue protein sequence, read N- to C-terminus: Deoxyhypusine hydroxylase (302 aa).

HEAT-like PBS-type repeat units lie at residues glutamate 23 to aspartate 49, leucine 54 to aspartate 80, valine 87 to aspartate 113, aspartate 175 to aspartate 201, phenylalanine 206 to aspartate 232, and valine 239 to aspartate 265. 4 residues coordinate Fe cation: histidine 56, glutamate 57, histidine 89, and glutamate 90. Residues histidine 208, glutamate 209, histidine 241, and glutamate 242 each coordinate Fe cation.

Belongs to the deoxyhypusine hydroxylase family. The cofactor is Fe(2+).

Its subcellular location is the endoplasmic reticulum membrane. The catalysed reaction is [eIF5A protein]-deoxyhypusine + AH2 + O2 = [eIF5A protein]-hypusine + A + H2O. It participates in protein modification; eIF5A hypusination. Catalyzes the hydroxylation of the N(6)-(4-aminobutyl)-L-lysine intermediate to form hypusine, an essential post-translational modification only found in mature eIF-5A factor. Essential for organismal viability and plays a role in a wide number of important processes such as cell growth and proliferation, and regulates induction of autophagy and protein synthesis. Has a role in eIF-5A-mediated translational control. The sequence is that of Deoxyhypusine hydroxylase from Drosophila melanogaster (Fruit fly).